The primary structure comprises 170 residues: Protein SprT (170 aa).

One can recognise a SprT-like domain in the interval 22 to 165 (LQLANQHLGT…RQCGEKLQFI (144 aa)). Residue histidine 78 participates in Zn(2+) binding. Glutamate 79 is an active-site residue. Histidine 82 contributes to the Zn(2+) binding site.

It belongs to the SprT family. It depends on Zn(2+) as a cofactor.

It is found in the cytoplasm. The sequence is that of Protein SprT from Yersinia pseudotuberculosis serotype O:1b (strain IP 31758).